A 137-amino-acid chain; its full sequence is Small ribosomal subunit protein uS12 (137 aa).

Residues 1–57 (MPTINQLVRKPRKSKVEKSKSPALNVGYNSHKKVQTNVSSPQKRGVATRVGTMTPKK) form a disordered region. Residue Asp102 is modified to 3-methylthioaspartic acid.

It belongs to the universal ribosomal protein uS12 family. As to quaternary structure, part of the 30S ribosomal subunit. Contacts proteins S8 and S17. May interact with IF1 in the 30S initiation complex.

Its function is as follows. With S4 and S5 plays an important role in translational accuracy. In terms of biological role, interacts with and stabilizes bases of the 16S rRNA that are involved in tRNA selection in the A site and with the mRNA backbone. Located at the interface of the 30S and 50S subunits, it traverses the body of the 30S subunit contacting proteins on the other side and probably holding the rRNA structure together. The combined cluster of proteins S8, S12 and S17 appears to hold together the shoulder and platform of the 30S subunit. This Streptococcus sanguinis (strain SK36) protein is Small ribosomal subunit protein uS12.